A 502-amino-acid chain; its full sequence is ATP synthase subunit alpha (502 aa).

The interval 115–135 (VDGLGPINTTNTRPIESPAPG) is disordered. 169–176 (GDRQTGKT) serves as a coordination point for ATP.

This sequence belongs to the ATPase alpha/beta chains family. In terms of assembly, F-type ATPases have 2 components, CF(1) - the catalytic core - and CF(0) - the membrane proton channel. CF(1) has five subunits: alpha(3), beta(3), gamma(1), delta(1), epsilon(1). CF(0) has three main subunits: a(1), b(2) and c(9-12). The alpha and beta chains form an alternating ring which encloses part of the gamma chain. CF(1) is attached to CF(0) by a central stalk formed by the gamma and epsilon chains, while a peripheral stalk is formed by the delta and b chains.

The protein localises to the cell membrane. It carries out the reaction ATP + H2O + 4 H(+)(in) = ADP + phosphate + 5 H(+)(out). Its function is as follows. Produces ATP from ADP in the presence of a proton gradient across the membrane. The alpha chain is a regulatory subunit. The protein is ATP synthase subunit alpha of Bacillus cereus (strain G9842).